Here is a 246-residue protein sequence, read N- to C-terminus: UPF0736 protein GWCH70_0753 (246 aa).

It belongs to the UPF0736 family.

The sequence is that of UPF0736 protein GWCH70_0753 from Geobacillus sp. (strain WCH70).